The sequence spans 117 residues: Large ribosomal subunit protein uL23 (117 aa).

This sequence belongs to the universal ribosomal protein uL23 family. In terms of assembly, part of the 50S ribosomal subunit. Contacts protein L29, and trigger factor when it is bound to the ribosome.

In terms of biological role, one of the early assembly proteins it binds 23S rRNA. One of the proteins that surrounds the polypeptide exit tunnel on the outside of the ribosome. Forms the main docking site for trigger factor binding to the ribosome. The protein is Large ribosomal subunit protein uL23 of Ruminiclostridium cellulolyticum (strain ATCC 35319 / DSM 5812 / JCM 6584 / H10) (Clostridium cellulolyticum).